We begin with the raw amino-acid sequence, 493 residues long: Vinyl phenol reductase (493 aa).

Residues Ala-19, Glu-38, Ser-46, Thr-50, Gly-52, Ala-156, Asp-224, Asn-448, and Val-467 each contribute to the FAD site.

The protein belongs to the FAD-dependent oxidoreductase 2 family. FRD/SDH subfamily. The cofactor is FAD.

The enzyme catalyses 4-vinylphenol + NADH + H(+) = 4-ethylphenol + NAD(+). It carries out the reaction 3,4-dihydroxystyrene + NADH + H(+) = 4-ethylcatechol + NAD(+). The catalysed reaction is 2-methoxy-4-vinylphenol + NADH + H(+) = 4-ethyl-2-methoxyphenol + NAD(+). Functionally, involved in the production of ethylphenols during the degradation of hydroxycinnamic acids. Catalyzes the reduction of vinylphenols (4-vinylphenol (4-hydroxystyrene), 4-vinylcatechol (3,4-dihydroxystyrene), and 4-vinylguaiacol (2-methoxy-4-vinylphenol)) to their corresponding ethylphenols (4-ethylphenol, 4-ethylcatechol, and 4-ethylguaiacol, respectively) in the presence of NADH. These compounds are considered the most important flavor components of fermented soy sauce, and, on the other hand, are considered off flavor and responsible for sensorial wine and cider alteration. The 4-ethylphenol produced by the gut bacteria L.plantarum strain WCFS1 can get subsequent sulfation to 4-ethylphenyl sulfate (4EPS) by host sulfotransferase (SULT1A1); 4EPS can enter the brain and seems to alter brain activity. Therefore, this enzyme likely plays a role in gut microbiota-host metabolic interactions. This is Vinyl phenol reductase from Lactiplantibacillus plantarum (strain ATCC BAA-793 / NCIMB 8826 / WCFS1) (Lactobacillus plantarum).